Here is a 94-residue protein sequence, read N- to C-terminus: NADH dehydrogenase [ubiquinone] iron-sulfur protein 3, mitochondrial (94 aa).

This sequence belongs to the complex I 30 kDa subunit family. Core subunit of respiratory chain NADH dehydrogenase (Complex I) which is composed of 45 different subunits. Interacts with NDUFAF3. Interacts with RAB5IF. Found in subcomplexes containing subunits NDUFS2, MT-ND1 and NDUFA13.

Its subcellular location is the mitochondrion inner membrane. It carries out the reaction a ubiquinone + NADH + 5 H(+)(in) = a ubiquinol + NAD(+) + 4 H(+)(out). Its function is as follows. Core subunit of the mitochondrial membrane respiratory chain NADH dehydrogenase (Complex I) which catalyzes electron transfer from NADH through the respiratory chain, using ubiquinone as an electron acceptor. Essential for the catalytic activity and assembly of complex I. This chain is NADH dehydrogenase [ubiquinone] iron-sulfur protein 3, mitochondrial, found in Mesocricetus auratus (Golden hamster).